The primary structure comprises 387 residues: Eukaryotic translation initiation factor 3 subunit M (387 aa).

The PCI domain maps to 181-340; that stretch reads LSSKVMIELL…RKVHISSTMH (160 aa).

This sequence belongs to the eIF-3 subunit M family. As to quaternary structure, component of the eukaryotic translation initiation factor 3 (eIF-3) complex. The eIF-3 complex interacts with pix.

It localises to the cytoplasm. Its subcellular location is the golgi apparatus. Functionally, component of the eukaryotic translation initiation factor 3 (eIF-3) complex, which is involved in protein synthesis of a specialized repertoire of mRNAs and, together with other initiation factors, stimulates binding of mRNA and methionyl-tRNAi to the 40S ribosome. The eIF-3 complex specifically targets and initiates translation of a subset of mRNAs involved in cell proliferation. The chain is Eukaryotic translation initiation factor 3 subunit M from Drosophila mojavensis (Fruit fly).